We begin with the raw amino-acid sequence, 61 residues long: Metallothionein-1C (61 aa).

Residues 1 to 29 (MDPNCSCSTGSSCSCAGSCTCKACRCPSC) are beta. The a divalent metal cation site is built by Cys5, Cys7, Cys13, Cys15, Cys19, Cys21, Cys24, Cys26, Cys29, Cys33, Cys34, Cys36, Cys37, Cys41, Cys44, Cys48, Cys50, Cys57, Cys59, and Cys60. The segment at 30–61 (KKSCCSCCPVGCAKCAQGCICKGASDKCSCCA) is alpha.

Belongs to the metallothionein superfamily. Type 1 family.

Metallothioneins have a high content of cysteine residues that bind various heavy metals; these proteins are transcriptionally regulated by both heavy metals and glucocorticoids. This is Metallothionein-1C (MT1C) from Ovis aries (Sheep).